Here is a 305-residue protein sequence, read N- to C-terminus: 2-aminophenol 1,6-dioxygenase beta subunit (305 aa).

Fe cation-binding residues include His-14, His-63, and His-196.

Belongs to the LigB/MhpB extradiol dioxygenase family. Heterotetramer of 2 alpha and 2 beta subunits. Fe(2+) serves as cofactor.

It catalyses the reaction 2-aminophenol + O2 = 2-aminomuconate 6-semialdehyde. Its activity is regulated as follows. Strongly inhibited by CuSO(4), FeCl(3), K(3)[Fe(CN)(6)], AgNO3, HgCl(2) and MnCl(2). Functionally, component of the 2-aminophenol 1,6-dioxygenase complex that catalyzes the ring fission of 2-aminophenol to produce 2-aminomuconic 6-semialdehyde. AmnB seems to be the catalytic subunit of the complex. The enzyme is also active toward 2-amino-p-cresol, 6-amino-m-cresol, 2-amino-m-cresol, 2-amino-4,5-dimethylphenol, 2-amino-4-chlorophenol, and catechol. The protein is 2-aminophenol 1,6-dioxygenase beta subunit (amnB) of Pseudomonas sp.